The primary structure comprises 256 residues: Sec-independent protein translocase protein TatC (256 aa).

6 consecutive transmembrane segments (helical) span residues 25-45 (VICV…IYHF), 77-97 (AIVA…AFIA), 117-137 (ILFY…VFSF), 158-178 (FALA…AIIL), 195-215 (PYII…DVFS), and 217-237 (TLLA…ARFY).

The protein belongs to the TatC family. As to quaternary structure, the Tat system comprises two distinct complexes: a TatABC complex, containing multiple copies of TatA, TatB and TatC subunits, and a separate TatA complex, containing only TatA subunits. Substrates initially bind to the TatABC complex, which probably triggers association of the separate TatA complex to form the active translocon.

It localises to the cell inner membrane. In terms of biological role, part of the twin-arginine translocation (Tat) system that transports large folded proteins containing a characteristic twin-arginine motif in their signal peptide across membranes. Together with TatB, TatC is part of a receptor directly interacting with Tat signal peptides. The chain is Sec-independent protein translocase protein TatC from Haemophilus influenzae (strain ATCC 51907 / DSM 11121 / KW20 / Rd).